An 89-amino-acid chain; its full sequence is Small ribosomal subunit protein uS17 (89 aa).

This sequence belongs to the universal ribosomal protein uS17 family. In terms of assembly, part of the 30S ribosomal subunit.

Functionally, one of the primary rRNA binding proteins, it binds specifically to the 5'-end of 16S ribosomal RNA. The protein is Small ribosomal subunit protein uS17 of Leptospira interrogans serogroup Icterohaemorrhagiae serovar Lai (strain 56601).